A 70-amino-acid polypeptide reads, in one-letter code: ATP synthase subunit c (70 aa).

2 consecutive transmembrane segments (helical) span residues 3 to 23 (ALAA…IGIA) and 44 to 64 (LFFI…VIAI).

This sequence belongs to the ATPase C chain family. As to quaternary structure, F-type ATPases have 2 components, F(1) - the catalytic core - and F(0) - the membrane proton channel. F(1) has five subunits: alpha(3), beta(3), gamma(1), delta(1), epsilon(1). F(0) has three main subunits: a(1), b(2) and c(10-14). The alpha and beta chains form an alternating ring which encloses part of the gamma chain. F(1) is attached to F(0) by a central stalk formed by the gamma and epsilon chains, while a peripheral stalk is formed by the delta and b chains.

It is found in the cell membrane. In terms of biological role, f(1)F(0) ATP synthase produces ATP from ADP in the presence of a proton or sodium gradient. F-type ATPases consist of two structural domains, F(1) containing the extramembraneous catalytic core and F(0) containing the membrane proton channel, linked together by a central stalk and a peripheral stalk. During catalysis, ATP synthesis in the catalytic domain of F(1) is coupled via a rotary mechanism of the central stalk subunits to proton translocation. Its function is as follows. Key component of the F(0) channel; it plays a direct role in translocation across the membrane. A homomeric c-ring of between 10-14 subunits forms the central stalk rotor element with the F(1) delta and epsilon subunits. The polypeptide is ATP synthase subunit c (Caldicellulosiruptor saccharolyticus (strain ATCC 43494 / DSM 8903 / Tp8T 6331)).